The following is a 417-amino-acid chain: Methylthioribose-1-phosphate isomerase (417 aa).

Residue D285 is the Proton donor of the active site.

The protein belongs to the eIF-2B alpha/beta/delta subunits family. MtnA subfamily.

It is found in the cytoplasm. The protein localises to the nucleus. It carries out the reaction 5-(methylsulfanyl)-alpha-D-ribose 1-phosphate = 5-(methylsulfanyl)-D-ribulose 1-phosphate. The protein operates within amino-acid biosynthesis; L-methionine biosynthesis via salvage pathway; L-methionine from S-methyl-5-thio-alpha-D-ribose 1-phosphate: step 1/6. Its function is as follows. Catalyzes the interconversion of methylthioribose-1-phosphate (MTR-1-P) into methylthioribulose-1-phosphate (MTRu-1-P). In Lachancea thermotolerans (strain ATCC 56472 / CBS 6340 / NRRL Y-8284) (Yeast), this protein is Methylthioribose-1-phosphate isomerase.